The chain runs to 1530 residues: Regulating synaptic membrane exocytosis protein 2 (1530 aa).

The interval 1–34 is disordered; it reads MSAPLGPRGRPAPTPAASQPPPQPEMPDLSHLTE. Positions 10–25 are enriched in pro residues; the sequence is RPAPTPAASQPPPQPE. The 169-residue stretch at 26–194 folds into the RabBD domain; sequence MPDLSHLTEE…TKSGAWFYNS (169 aa). The FYVE-type zinc finger occupies 126-182; it reads KGDAPTCGICHKTKFADGCGHNCSYCQTKFCARCGGRVSLRSNKVMWVCNLCRKQQE. 8 residues coordinate Zn(2+): Cys-132, Cys-135, Cys-148, Cys-151, Cys-156, Cys-159, Cys-174, and Cys-177. Disordered stretches follow at residues 195–608 and 632–655; these read GSNT…ERQK and SGVD…HPVT. Composition is skewed to basic and acidic residues over residues 210 to 225, 327 to 338, 357 to 375, 391 to 410, and 419 to 443; these read LRNE…KLHE, EPGHLNYRDSNR, RDEY…RYRS, EQMR…RHSD, and EDSR…RRAA. At Ser-409 the chain carries Phosphoserine. Positions 458-472 are enriched in polar residues; the sequence is AQGQSSYPQRTSNHS. Positions 484 to 501 are enriched in basic and acidic residues; the sequence is DRPDMRRADSLRKQHHLD. The span at 519–530 shows a compositional bias: polar residues; the sequence is RNDSLSSDQSES. The span at 537-546 shows a compositional bias: basic residues; sequence RPHKSKKGGK. A compositionally biased stretch (acidic residues) spans 567–577; that stretch reads SCDDVELESES. Composition is skewed to basic and acidic residues over residues 578–592 and 643–653; these read VSEK…RKTS and NEEHSHSDKHP. The PDZ domain maps to 677-763; that stretch reads DGSVPRDSGA…EPQVELVVSR (87 aa). At Thr-698 the chain carries Phosphothreonine. The tract at residues 771–802 is disordered; it reads IPDSTHAQLESSSSSFESQKMDRPSISVTSPM. A phosphoserine mark is found at Ser-800 and Ser-803. The region spanning 814-937 is the C2 1 domain; it reads LSGQLSIKLW…ALLDDEPHWY (124 aa). 6 disordered regions span residues 948–982, 1003–1122, 1130–1149, 1154–1187, 1242–1263, and 1282–1307; these read PLPR…SEVS, LQSS…ERSA, RQMK…RLEQ, KYRS…SRTS, SLEK…TSGK, and KSRS…QRST. Positions 1003–1024 are enriched in polar residues; that stretch reads LQSSTLSVPEQVMSSNHCSPSG. The segment covering 1067–1086 has biased composition (basic and acidic residues); the sequence is RMDRHRVMDDHYSSDRDRSH. A compositionally biased stretch (polar residues) spans 1088-1101; that stretch reads RTGSVQTSPSSTPG. At Ser-1095 the chain carries Phosphoserine. A compositionally biased stretch (basic and acidic residues) spans 1154 to 1165; the sequence is KYRSGWDPHRGA. Position 1175 is a phosphoserine (Ser-1175). A compositionally biased stretch (low complexity) spans 1178-1187; that stretch reads SDVSAVSRTS. A Phosphoserine modification is found at Ser-1251. Residues 1376–1494 enclose the C2 2 domain; it reads AMGDIQVGMM…ELSNMVIGWF (119 aa). Residues Ser-1515 and Ser-1518 each carry the phosphoserine modification.

Interacts with TSPOAP1 and RIMBP2. Interacts with PPFIA3 and PPFIA4. Interacts via its zinc finger with the first C2 domain of UNC13A. Forms a complex consisting of UNC13A, RIMS2 and RAB3A. Heterodimer with PCLO. Part of a ternary complex involving PCLO and EPAC2. Interacts with RAB3A and RAB3B that have been activated by GTP-binding. Interacts with RAB3C, RAB3D and RAB26. As to expression, detected in testis, pituitary and an insulinoma cell line. Detected at low levels in cerebellar cortex.

It is found in the synapse. The protein localises to the synaptosome. Functionally, rab effector involved in exocytosis. May act as scaffold protein. Plays a role in dendrite formation by melanocytes. The protein is Regulating synaptic membrane exocytosis protein 2 (Rims2) of Mus musculus (Mouse).